A 270-amino-acid chain; its full sequence is Phosphate import ATP-binding protein PstB 1 (270 aa).

Positions 24-265 (LAVERLNLFY…PYQRQTEDYI (242 aa)) constitute an ABC transporter domain. ATP is bound at residue 56–63 (GPSGCGKS).

This sequence belongs to the ABC transporter superfamily. Phosphate importer (TC 3.A.1.7) family. In terms of assembly, the complex is composed of two ATP-binding proteins (PstB), two transmembrane proteins (PstC and PstA) and a solute-binding protein (PstS).

It localises to the cell inner membrane. The catalysed reaction is phosphate(out) + ATP + H2O = ADP + 2 phosphate(in) + H(+). Its function is as follows. Part of the ABC transporter complex PstSACB involved in phosphate import. Responsible for energy coupling to the transport system. The protein is Phosphate import ATP-binding protein PstB 1 of Yersinia pestis bv. Antiqua (strain Antiqua).